We begin with the raw amino-acid sequence, 189 residues long: Ras-like protein 1 (189 aa).

10 to 17 (GGGGVGKS) serves as a coordination point for GTP. The Effector region motif lies at 32–40 (YDPTIEDSY). Residues 57–61 (DTAGQ) and 116–119 (NKCD) each bind GTP. At C186 the chain carries Cysteine methyl ester. C186 carries the S-geranylgeranyl cysteine lipid modification. Positions 187–189 (LLL) are cleaved as a propeptide — removed in mature form.

This sequence belongs to the small GTPase superfamily. Ras family.

It is found in the cell membrane. It catalyses the reaction GTP + H2O = GDP + phosphate + H(+). Its function is as follows. Ras proteins bind GDP/GTP and possess intrinsic GTPase activity. This chain is Ras-like protein 1 (RAS1), found in Physarum polycephalum (Slime mold).